Here is a 200-residue protein sequence, read N- to C-terminus: MLLLASASPARRRLLEQAQIPHQVMVSGVDEDQIHHPDPAQLVQLLAEAKASAVKLKVEQSAELNVSIKAVLGCDSVLAFEGEVFGKPVDAAEAVARWQRMRGKWAELHTGHCLIPPSFAPTTEGRAPEMQCTCVTTRVLFANLTDVEVEDYVASGEPLQCAGGFALEGRGGCCVEQLAGCYSNVIGLSLPLLRRWLSLS.

The active-site Proton acceptor is the D75.

This sequence belongs to the Maf family. Requires a divalent metal cation as cofactor.

The protein resides in the cytoplasm. The enzyme catalyses a ribonucleoside 5'-triphosphate + H2O = a ribonucleoside 5'-phosphate + diphosphate + H(+). It carries out the reaction a 2'-deoxyribonucleoside 5'-triphosphate + H2O = a 2'-deoxyribonucleoside 5'-phosphate + diphosphate + H(+). Nucleoside triphosphate pyrophosphatase. May have a dual role in cell division arrest and in preventing the incorporation of modified nucleotides into cellular nucleic acids. The chain is Nucleoside triphosphate pyrophosphatase from Synechococcus sp. (strain CC9311).